The primary structure comprises 119 residues: Urease subunit beta (119 aa).

It belongs to the urease beta subunit family. As to quaternary structure, heterotrimer of UreA (gamma), UreB (beta) and UreC (alpha) subunits. Three heterotrimers associate to form the active enzyme.

The protein resides in the cytoplasm. The catalysed reaction is urea + 2 H2O + H(+) = hydrogencarbonate + 2 NH4(+). Its pathway is nitrogen metabolism; urea degradation; CO(2) and NH(3) from urea (urease route): step 1/1. The protein is Urease subunit beta of Tolumonas auensis (strain DSM 9187 / NBRC 110442 / TA 4).